A 235-amino-acid polypeptide reads, in one-letter code: Regulator of G-protein signaling 18 (235 aa).

A Phosphoserine modification is found at S49. The RGS domain maps to 86–202; that stretch reads SFDKLLSHRD…LKSETYLHLI (117 aa). A phosphoserine mark is found at S216 and S218.

In terms of tissue distribution, expressed in bone marrow, spleen, fetal liver and lung. At very low levels expressed in heart.

Its subcellular location is the cytoplasm. Functionally, inhibits signal transduction by increasing the GTPase activity of G protein alpha subunits thereby driving them into their inactive GDP-bound form. Binds to G(i) alpha-1, G(i) alpha-2, G(i) alpha-3 and G(q) alpha. In Mus musculus (Mouse), this protein is Regulator of G-protein signaling 18 (Rgs18).